The sequence spans 354 residues: Fe(3+) ions import ATP-binding protein FbpC (354 aa).

The ABC transporter domain occupies 4 to 236 (LELHAVHKSF…PRDAQTALFL (233 aa)). Residue 36-43 (GPSGSGKT) coordinates ATP.

This sequence belongs to the ABC transporter superfamily. Fe(3+) ion importer (TC 3.A.1.10) family. As to quaternary structure, the complex is composed of two ATP-binding proteins (FbpC), two transmembrane proteins (FbpB) and a solute-binding protein (FbpA).

It localises to the cell inner membrane. The enzyme catalyses Fe(3+)(out) + ATP + H2O = Fe(3+)(in) + ADP + phosphate + H(+). In terms of biological role, part of the ABC transporter complex FbpABC involved in Fe(3+) ions import. Responsible for energy coupling to the transport system. The sequence is that of Fe(3+) ions import ATP-binding protein FbpC from Pseudomonas fluorescens (strain ATCC BAA-477 / NRRL B-23932 / Pf-5).